The primary structure comprises 204 residues: MEAYKKHTSIAALMNRSNVDTDQIIPTQFLKKVERTGFGIHLFHDWRFLADNVTPNPEFELNKPVFKGAKILVTGDNFGCGSSREHAPWAIADYGFNTVISTSFADIFYTNCFKNALLPIRVSKDELAALMAEISANEGVKFTVDLEAEKLTTPGGIVIHIEVDPFRKESLLGGLDDIAWTLKHEDKITAFEEKQKQTLPWLWK.

This sequence belongs to the LeuD family. LeuD type 1 subfamily. Heterodimer of LeuC and LeuD.

The enzyme catalyses (2R,3S)-3-isopropylmalate = (2S)-2-isopropylmalate. The protein operates within amino-acid biosynthesis; L-leucine biosynthesis; L-leucine from 3-methyl-2-oxobutanoate: step 2/4. In terms of biological role, catalyzes the isomerization between 2-isopropylmalate and 3-isopropylmalate, via the formation of 2-isopropylmaleate. The chain is 3-isopropylmalate dehydratase small subunit from Psychromonas ingrahamii (strain DSM 17664 / CCUG 51855 / 37).